We begin with the raw amino-acid sequence, 385 residues long: ADP,ATP carrier protein 2, mitochondrial (385 aa).

Residues 1-74 constitute a mitochondrion transit peptide; sequence MVEQTQHPTI…ATTTSPVFVQ (74 aa). Solcar repeat units lie at residues 82-175, 187-280, and 288-374; these read TNFA…FKRL, KWFA…VKPV, and DSFF…LQLI. 5 helical membrane-spanning segments follow: residues 84–111, 152–176, 185–205, 256–277, and 291–311; these read FAID…VKLL, TANV…KRLF, YWKW…SSLL, FNIS…YDSV, and FASF…SYPI. Arg157 and Lys169 together coordinate ADP. Arg315 lines the ADP pocket. Residues 315–320 are important for transport activity; the sequence is RRRMMM. The Nucleotide carrier signature motif signature appears at 315-320; it reads RRRMMM. Residues 351 to 371 traverse the membrane as a helical segment; it reads AGANILRAVAGAGVLAGYDKL.

The protein belongs to the mitochondrial carrier (TC 2.A.29) family. Monomer.

The protein localises to the mitochondrion inner membrane. It catalyses the reaction ADP(in) + ATP(out) = ADP(out) + ATP(in). Its activity is regulated as follows. The matrix-open state (m-state) is inhibited by the membrane-permeable bongkrekic acid (BKA). The cytoplasmic-open state (c-state) is inhibited by the membrane-impermeable toxic inhibitor carboxyatractyloside (CATR). Functionally, ADP:ATP antiporter that mediates import of ADP into the mitochondrial matrix for ATP synthesis, and export of ATP out to fuel the cell. Cycles between the cytoplasmic-open state (c-state) and the matrix-open state (m-state): operates by the alternating access mechanism with a single substrate-binding site intermittently exposed to either the cytosolic (c-state) or matrix (m-state) side of the inner mitochondrial membrane. This Arabidopsis thaliana (Mouse-ear cress) protein is ADP,ATP carrier protein 2, mitochondrial (AAC2).